A 444-amino-acid chain; its full sequence is Exodeoxyribonuclease 7 large subunit (444 aa).

The protein belongs to the XseA family. Heterooligomer composed of large and small subunits.

It localises to the cytoplasm. The enzyme catalyses Exonucleolytic cleavage in either 5'- to 3'- or 3'- to 5'-direction to yield nucleoside 5'-phosphates.. In terms of biological role, bidirectionally degrades single-stranded DNA into large acid-insoluble oligonucleotides, which are then degraded further into small acid-soluble oligonucleotides. The protein is Exodeoxyribonuclease 7 large subunit of Xylella fastidiosa (strain 9a5c).